The primary structure comprises 195 residues: Imidazoleglycerol-phosphate dehydratase (195 aa).

Belongs to the imidazoleglycerol-phosphate dehydratase family.

It is found in the cytoplasm. It carries out the reaction D-erythro-1-(imidazol-4-yl)glycerol 3-phosphate = 3-(imidazol-4-yl)-2-oxopropyl phosphate + H2O. It participates in amino-acid biosynthesis; L-histidine biosynthesis; L-histidine from 5-phospho-alpha-D-ribose 1-diphosphate: step 6/9. The protein is Imidazoleglycerol-phosphate dehydratase of Paraburkholderia phymatum (strain DSM 17167 / CIP 108236 / LMG 21445 / STM815) (Burkholderia phymatum).